The sequence spans 309 residues: Probable manganese-dependent inorganic pyrophosphatase (309 aa).

Residues His-9, Asp-13, Asp-15, Asp-75, His-97, and Asp-149 each coordinate Mn(2+).

The protein belongs to the PPase class C family. The cofactor is Mn(2+).

It localises to the cytoplasm. The enzyme catalyses diphosphate + H2O = 2 phosphate + H(+). This is Probable manganese-dependent inorganic pyrophosphatase from Staphylococcus epidermidis (strain ATCC 35984 / DSM 28319 / BCRC 17069 / CCUG 31568 / BM 3577 / RP62A).